A 335-amino-acid polypeptide reads, in one-letter code: Serpentine receptor class XA 10 (335 aa).

The Extracellular segment spans residues 1 to 10; that stretch reads MDVDAAVVKR. The chain crosses the membrane as a helical span at residues 11–31; the sequence is IALWVYETCSVFNLFYCITLS. At 32–46 the chain is on the cytoplasmic side; sequence LAIKTSKNNALPATY. A helical transmembrane segment spans residues 47–67; it reads IYNMAISNALLVIFGIMVYIL. Over 68–82 the chain is Extracellular; that stretch reads PYYMSDKTYKTYRDS. A helical membrane pass occupies residues 83–103; the sequence is IGAMISVGVTFNYLHPMLTLI. Residues 104 to 126 lie on the Cytoplasmic side of the membrane; sequence LMTINRIAVVVSMQASQLFTSSK. Residues 127–147 form a helical membrane-spanning segment; sequence IWLYTSFHMTANFACLIIPYL. Residues 148 to 177 are Extracellular-facing; the sequence is SECRINYDIRKVGFISECAPDRHQITTFSN. Residues 178–198 traverse the membrane as a helical segment; that stretch reads YYSVFFPFVAFFFNVLVIINF. Topologically, residues 199–238 are cytoplasmic; that stretch reads KLQRSPTYTKIKNMFRRGNGDQFTSMPSDVLKAKKKTERM. The helical transmembrane segment at 239–259 threads the bilayer; it reads LMIQAFITAFYLSVYELTSLV. Topologically, residues 260-276 are extracellular; that stretch reads LRVVPELFGNLSLDGKL. The helical transmembrane segment at 277 to 297 threads the bilayer; that stretch reads AFTYFRLAQVPCHVFLVYFIF. At 298–319 the chain is on the cytoplasmic side; the sequence is TPVTRKIYMDFVRERVFCMKPA.

The protein belongs to the nematode receptor-like protein srxa family.

The protein localises to the membrane. The protein is Serpentine receptor class XA 10 (srxa-10) of Caenorhabditis elegans.